The chain runs to 200 residues: uncharacterized protein (200 aa).

This is an uncharacterized protein from Xylella fastidiosa (strain 9a5c).